Reading from the N-terminus, the 256-residue chain is GDSL esterase/lipase CPRD49 (256 aa).

Positions 1 to 27 (MVGPARPQIVLFGSSIVQMSFGHGGWG) are cleaved as a signal peptide. Catalysis depends on Ser-15, which acts as the Nucleophile. Residues Asn-49 and Asn-79 are each glycosylated (N-linked (GlcNAc...) asparagine). Residue His-213 is part of the active site. Residue Asn-243 is glycosylated (N-linked (GlcNAc...) asparagine).

This sequence belongs to the 'GDSL' lipolytic enzyme family. In terms of tissue distribution, specifically expressed in anthers (stages 8-12).

It is found in the secreted. In Arabidopsis thaliana (Mouse-ear cress), this protein is GDSL esterase/lipase CPRD49 (CPRD49).